A 391-amino-acid chain; its full sequence is Elongation factor Tu (391 aa).

One can recognise a tr-type G domain in the interval 10 to 201; sequence KPHVNIGTIG…AVDDYIPTPE (192 aa). Residues 19–26 are G1; that stretch reads GHVDHGKT. 19–26 lines the GTP pocket; it reads GHVDHGKT. T26 is a Mg(2+) binding site. The interval 55 to 59 is G2; the sequence is GITIS. Positions 76–79 are G3; the sequence is DCPG. Residues 76-80 and 131-134 each bind GTP; these read DCPGH and NKVD. Residues 131–134 form a G4 region; sequence NKVD. The G5 stretch occupies residues 169–171; the sequence is SAL.

Belongs to the TRAFAC class translation factor GTPase superfamily. Classic translation factor GTPase family. EF-Tu/EF-1A subfamily. Monomer.

The protein localises to the cytoplasm. The enzyme catalyses GTP + H2O = GDP + phosphate + H(+). GTP hydrolase that promotes the GTP-dependent binding of aminoacyl-tRNA to the A-site of ribosomes during protein biosynthesis. In Paracoccus denitrificans (strain Pd 1222), this protein is Elongation factor Tu.